We begin with the raw amino-acid sequence, 316 residues long: 4-hydroxy-3-methylbut-2-enyl diphosphate reductase (316 aa).

Cys12 contacts [4Fe-4S] cluster. Residues His41 and His74 each contribute to the (2E)-4-hydroxy-3-methylbut-2-enyl diphosphate site. Dimethylallyl diphosphate contacts are provided by His41 and His74. Isopentenyl diphosphate-binding residues include His41 and His74. Cys96 is a [4Fe-4S] cluster binding site. His124 provides a ligand contact to (2E)-4-hydroxy-3-methylbut-2-enyl diphosphate. Residue His124 coordinates dimethylallyl diphosphate. Residue His124 coordinates isopentenyl diphosphate. The active-site Proton donor is Glu126. Thr169 provides a ligand contact to (2E)-4-hydroxy-3-methylbut-2-enyl diphosphate. [4Fe-4S] cluster is bound at residue Cys199. The (2E)-4-hydroxy-3-methylbut-2-enyl diphosphate site is built by Ser227, Ser228, Asn229, and Ser271. Ser227, Ser228, Asn229, and Ser271 together coordinate dimethylallyl diphosphate. Isopentenyl diphosphate contacts are provided by Ser227, Ser228, Asn229, and Ser271.

It belongs to the IspH family. [4Fe-4S] cluster serves as cofactor.

The enzyme catalyses isopentenyl diphosphate + 2 oxidized [2Fe-2S]-[ferredoxin] + H2O = (2E)-4-hydroxy-3-methylbut-2-enyl diphosphate + 2 reduced [2Fe-2S]-[ferredoxin] + 2 H(+). It carries out the reaction dimethylallyl diphosphate + 2 oxidized [2Fe-2S]-[ferredoxin] + H2O = (2E)-4-hydroxy-3-methylbut-2-enyl diphosphate + 2 reduced [2Fe-2S]-[ferredoxin] + 2 H(+). It participates in isoprenoid biosynthesis; dimethylallyl diphosphate biosynthesis; dimethylallyl diphosphate from (2E)-4-hydroxy-3-methylbutenyl diphosphate: step 1/1. The protein operates within isoprenoid biosynthesis; isopentenyl diphosphate biosynthesis via DXP pathway; isopentenyl diphosphate from 1-deoxy-D-xylulose 5-phosphate: step 6/6. In terms of biological role, catalyzes the conversion of 1-hydroxy-2-methyl-2-(E)-butenyl 4-diphosphate (HMBPP) into a mixture of isopentenyl diphosphate (IPP) and dimethylallyl diphosphate (DMAPP). Acts in the terminal step of the DOXP/MEP pathway for isoprenoid precursor biosynthesis. The chain is 4-hydroxy-3-methylbut-2-enyl diphosphate reductase from Xanthomonas campestris pv. campestris (strain ATCC 33913 / DSM 3586 / NCPPB 528 / LMG 568 / P 25).